The primary structure comprises 331 residues: Proton-translocating ferredoxin:NAD(+) oxidoreductase complex subunit D (331 aa).

3 consecutive transmembrane segments (helical) span residues 23–43 (ESVSKIMWSVCLALTPAAVFG), 44–64 (VFNFGIHALEVIITGIIAAVV), and 84–106 (AFLTGLLLSMCLPPDIPPYMVAI). Thr-163 carries the post-translational modification FMN phosphoryl threonine. 4 helical membrane passes run 196–216 (NGSIGETSTILLVLGGLYLIY), 226–246 (VVMIGTVGILTWAFGGTTGIF), 251–271 (VFHMMAGGLVIGAFFMATDMV), and 273–293 (IPMTIKGQIIFALGAGALTSL).

It belongs to the NqrB/RnfD family. The complex is composed of six subunits: RnfA, RnfB, RnfC, RnfD, RnfE and RnfG. The cofactor is FMN.

It is found in the cell membrane. Functionally, part of a membrane-bound complex that couples electron transfer with translocation of ions across the membrane. Couples electron transfer from reduced ferredoxin to NAD(+) with translocation of H(+) out of the cell. Essential for energy conservation during autotrophic growth. Contributes to ATP synthesis during heterotrophic growth. This chain is Proton-translocating ferredoxin:NAD(+) oxidoreductase complex subunit D, found in Clostridium ljungdahlii (strain ATCC 55383 / DSM 13528 / PETC).